A 279-amino-acid chain; its full sequence is Large ribosomal subunit protein uL2 (279 aa).

Disordered regions lie at residues 29 to 49 and 202 to 279; these read PVKQ…NGRV and NASI…KKKG. Residues 36 to 49 are compositionally biased toward low complexity; it reads GKSSSGGRNNNGRV. Basic residues predominate over residues 209 to 220; that stretch reads GRSRWLGRRPHN.

It belongs to the universal ribosomal protein uL2 family. As to quaternary structure, part of the 50S ribosomal subunit. Forms a bridge to the 30S subunit in the 70S ribosome.

In terms of biological role, one of the primary rRNA binding proteins. Required for association of the 30S and 50S subunits to form the 70S ribosome, for tRNA binding and peptide bond formation. It has been suggested to have peptidyltransferase activity; this is somewhat controversial. Makes several contacts with the 16S rRNA in the 70S ribosome. In Beijerinckia indica subsp. indica (strain ATCC 9039 / DSM 1715 / NCIMB 8712), this protein is Large ribosomal subunit protein uL2.